A 228-amino-acid chain; its full sequence is UPF0173 metal-dependent hydrolase BcerKBAB4_4442 (228 aa).

This sequence belongs to the UPF0173 family.

The polypeptide is UPF0173 metal-dependent hydrolase BcerKBAB4_4442 (Bacillus mycoides (strain KBAB4) (Bacillus weihenstephanensis)).